The chain runs to 604 residues: Kinesin-like protein KIN-14O (604 aa).

Residues 22–61 adopt a coiled-coil conformation; sequence MLNHDKDISALQEEISALRSRQRHLDHRRQEALDKLIDLK. Positions 63 to 387 constitute a Kinesin motor domain; the sequence is SIRVFCRVRP…LSFAKRARSI (325 aa). Position 141–148 (141–148) interacts with ATP; sequence GQTGTGKT. Residues 383-443 are a coiled coil; it reads RARSIESSKE…EERKKLSSSA (61 aa). Disordered stretches follow at residues 465-511 and 565-604; these read DSAE…KTRL and SNNS…SSLT. Positions 565–574 are enriched in polar residues; that stretch reads SNNSIDSTAA. The segment covering 593-604 has biased composition (basic residues); that stretch reads LHQHRRRMSSLT.

This sequence belongs to the TRAFAC class myosin-kinesin ATPase superfamily. Kinesin family. KIN-14 subfamily.

The protein is Kinesin-like protein KIN-14O of Oryza sativa subsp. japonica (Rice).